Reading from the N-terminus, the 272-residue chain is Sordarin/hypoxysordarin biosynthesis cluster protein P (272 aa).

Residues N6 and N23 are each glycosylated (N-linked (GlcNAc...) asparagine). A run of 2 helical transmembrane segments spans residues 31–51 (FLAS…LLFL) and 67–87 (AYHM…VDLA). Residue N208 is glycosylated (N-linked (GlcNAc...) asparagine).

The protein resides in the membrane. It functions in the pathway antibiotic biosynthesis. In terms of biological role, part of the gene cluster that mediates the biosynthesis of sordarin and hypoxysordarin, glycoside antibiotics with a unique tetracyclic diterpene aglycone structure. First, the geranylgeranyl diphosphate synthase sdnC constructs GGDP from farnesyl diphosphate and isopentenyl diphosphate. The diterpene cyclase sdnA then catalyzes the cyclization of GGDP to afford cycloaraneosene. Cycloaraneosene is then hydroxylated four times by the putative cytochrome P450 monooxygenases sdnB, sdnE, sdnF and sdnH to give a hydroxylated cycloaraneosene derivative such as cycloaraneosene-8,9,13,19-tetraol. Although the order of the hydroxylations is unclear, at least C8, C9 and C13 of the cycloaraneosene skeleton are hydroxylated before the sordaricin formation. Dehydration of the 13-hydroxy group of the hydroxylated cycloaraneosene derivative might be catalyzed by an unassigned hypothetical protein such as sdnG and sdnP to construct the cyclopentadiene moiety. The FAD-dependent oxidoreductase sdnN is proposed to catalyze the oxidation at C9 of the hydroxylated cycloaraneosene derivative and also catalyze the Baeyer-Villiger oxidation to give the lactone intermediate. The presumed lactone intermediate would be hydrolyzed to give an acrolein moiety and a carboxylate moiety. Then, [4+2]cycloaddition would occur between the acrolein moiety and the cyclopentadiene moiety to give sordaricin. SdnN might also be involved in the [4+2]cycloaddition after the hypothesized oxidation to accommodate the oxidized product and prompt the [4+2]cycloaddition. GDP-6-deoxy-D-altrose may be biosynthesized from GDP-D-mannose by the putative GDP-mannose-4,6-dehydratase sdnI and the short-chain dehydrogenase sdnK. The glycosyltransferase sdnJ catalyzes the attachment of 6-deoxy-D-altrose onto the 19-hydroxy group of sordaricin to give 4'-O-demethylsordarin. The methyltransferase sdnD would complete the biosynthesis of sordarin. Sordarin can be further modified into hypoxysordarin. The unique acyl chain at the 3'-hydroxy group of hypoxysordarin would be constructed by an iterative type I PKS sdnO and the trans-acting polyketide methyltransferase sdnL. SdnL would be responsible for the introduction of an alpha-methyl group of the polyketide chain. Alternatively, the beta-lactamase-like protein sdnR might be responsible for the cleavage and transfer of the polyketide chain from the PKS sdnO to sordarin. Two putative cytochrome P450 monooxygenases, sdnQ and sdnT, might catalyze the epoxidations of the polyketide chain to complete the biosynthesis of hypoxysordarin. Transcriptional regulators sdnM and sdnS are presumably encoded for the transcriptional regulation of the expression of the sdn gene cluster. This is Sordarin/hypoxysordarin biosynthesis cluster protein P from Sordaria araneosa (Pleurage araneosa).